Consider the following 93-residue polypeptide: Small ribosomal subunit protein uS19 (93 aa).

Belongs to the universal ribosomal protein uS19 family.

Functionally, protein S19 forms a complex with S13 that binds strongly to the 16S ribosomal RNA. This is Small ribosomal subunit protein uS19 from Mycobacterium sp. (strain JLS).